The following is a 440-amino-acid chain: C4-dicarboxylate TRAP transporter large permease protein DctM (440 aa).

The next 13 membrane-spanning stretches (helical) occupy residues 4–24 (LIIFGLLIALMLTGMPISISL), 54–74 (FEIMAIPFFILAGNFLTHGGV), 89–109 (WHGGLGLAGVIACALFAAVSG), 112–132 (PATVVAIGSVILPAMVNQGFP), 148–168 (ILIPPSIVMVMYAVATSGMVV), 181–201 (VGELFMAGVVPGLMLAGFLAF), 230–250 (AAWGLMLIVVVIGGIYAGIFT), 255–275 (AAMSAVYAFFISVFVYKDLTL), 291–311 (MLLYIITNAVLFSFLMAHEGI), 318–338 (WMVNAGLSWWMFLIIVNILLL), 349–369 (IVLIMAPILFPVAVRLGIDPV), 370–390 (HFGIMIVVNMEVGMCHPPVGL), and 410–430 (VWPWLLTMLAFLVLVTYVPAI).

Belongs to the TRAP transporter large permease family. As to quaternary structure, the complex comprises the extracytoplasmic solute receptor protein DctP, and the two transmembrane proteins DctQ and DctM.

It is found in the cell inner membrane. Functionally, part of the tripartite ATP-independent periplasmic (TRAP) transport system DctPQM involved in C4-dicarboxylates uptake. The sequence is that of C4-dicarboxylate TRAP transporter large permease protein DctM from Rhodobacter capsulatus (Rhodopseudomonas capsulata).